Reading from the N-terminus, the 213-residue chain is Large ribosomal subunit protein uL1 (213 aa).

It belongs to the universal ribosomal protein uL1 family.

The sequence is that of Large ribosomal subunit protein uL1 (RPL10A) from Chlamydomonas reinhardtii (Chlamydomonas smithii).